A 132-amino-acid chain; its full sequence is Small ribosomal subunit protein uS8 (132 aa).

This sequence belongs to the universal ribosomal protein uS8 family. In terms of assembly, part of the 30S ribosomal subunit. Contacts proteins S5 and S12.

Functionally, one of the primary rRNA binding proteins, it binds directly to 16S rRNA central domain where it helps coordinate assembly of the platform of the 30S subunit. This chain is Small ribosomal subunit protein uS8, found in Bacillus subtilis (strain 168).